The sequence spans 421 residues: UDP-N-acetylglucosamine 1-carboxyvinyltransferase 1 (421 aa).

Phosphoenolpyruvate is bound at residue 22–23 (KN). Arginine 95 provides a ligand contact to UDP-N-acetyl-alpha-D-glucosamine. The active-site Proton donor is the cysteine 119. Residue cysteine 119 is modified to 2-(S-cysteinyl)pyruvic acid O-phosphothioketal. Residues 124–128 (RPIEQ), aspartate 308, and valine 330 each bind UDP-N-acetyl-alpha-D-glucosamine.

This sequence belongs to the EPSP synthase family. MurA subfamily.

The protein localises to the cytoplasm. It carries out the reaction phosphoenolpyruvate + UDP-N-acetyl-alpha-D-glucosamine = UDP-N-acetyl-3-O-(1-carboxyvinyl)-alpha-D-glucosamine + phosphate. Its pathway is cell wall biogenesis; peptidoglycan biosynthesis. Cell wall formation. Adds enolpyruvyl to UDP-N-acetylglucosamine. The polypeptide is UDP-N-acetylglucosamine 1-carboxyvinyltransferase 1 (Staphylococcus aureus (strain MW2)).